A 239-amino-acid chain; its full sequence is UDP-2,3-diacylglucosamine hydrolase (239 aa).

The Mn(2+) site is built by D8, H10, D41, N78, and H113. Position 78-79 (78-79 (NR)) interacts with substrate. Residues D121, S159, N163, K166, and H194 each coordinate substrate. Mn(2+) contacts are provided by H194 and H196.

The protein belongs to the LpxH family. The cofactor is Mn(2+).

It localises to the cell inner membrane. It carries out the reaction UDP-2-N,3-O-bis[(3R)-3-hydroxytetradecanoyl]-alpha-D-glucosamine + H2O = 2-N,3-O-bis[(3R)-3-hydroxytetradecanoyl]-alpha-D-glucosaminyl 1-phosphate + UMP + 2 H(+). The protein operates within glycolipid biosynthesis; lipid IV(A) biosynthesis; lipid IV(A) from (3R)-3-hydroxytetradecanoyl-[acyl-carrier-protein] and UDP-N-acetyl-alpha-D-glucosamine: step 4/6. In terms of biological role, hydrolyzes the pyrophosphate bond of UDP-2,3-diacylglucosamine to yield 2,3-diacylglucosamine 1-phosphate (lipid X) and UMP by catalyzing the attack of water at the alpha-P atom. Involved in the biosynthesis of lipid A, a phosphorylated glycolipid that anchors the lipopolysaccharide to the outer membrane of the cell. The polypeptide is UDP-2,3-diacylglucosamine hydrolase (Shewanella sp. (strain MR-4)).